Here is a 222-residue protein sequence, read N- to C-terminus: 3-demethoxyubiquinol 3-hydroxylase (222 aa).

Residues glutamate 71, glutamate 101, histidine 104, glutamate 153, glutamate 185, and histidine 188 each coordinate Fe cation.

It belongs to the COQ7 family. The cofactor is Fe cation.

It localises to the cell membrane. It carries out the reaction a 5-methoxy-2-methyl-3-(all-trans-polyprenyl)benzene-1,4-diol + AH2 + O2 = a 3-demethylubiquinol + A + H2O. The protein operates within cofactor biosynthesis; ubiquinone biosynthesis. Functionally, catalyzes the hydroxylation of 2-nonaprenyl-3-methyl-6-methoxy-1,4-benzoquinol during ubiquinone biosynthesis. This is 3-demethoxyubiquinol 3-hydroxylase from Bordetella bronchiseptica (strain ATCC BAA-588 / NCTC 13252 / RB50) (Alcaligenes bronchisepticus).